Here is a 452-residue protein sequence, read N- to C-terminus: Enolase (452 aa).

Gln167 provides a ligand contact to (2R)-2-phosphoglycerate. Glu209 functions as the Proton donor in the catalytic mechanism. Residues Asp250, Glu310, and Asp337 each contribute to the Mg(2+) site. 4 residues coordinate (2R)-2-phosphoglycerate: Lys362, Arg391, Ser392, and Lys413. The active-site Proton acceptor is Lys362.

It belongs to the enolase family. Mg(2+) is required as a cofactor.

It is found in the cytoplasm. The protein localises to the secreted. The protein resides in the cell surface. The catalysed reaction is (2R)-2-phosphoglycerate = phosphoenolpyruvate + H2O. It participates in carbohydrate degradation; glycolysis; pyruvate from D-glyceraldehyde 3-phosphate: step 4/5. Its function is as follows. Catalyzes the reversible conversion of 2-phosphoglycerate (2-PG) into phosphoenolpyruvate (PEP). It is essential for the degradation of carbohydrates via glycolysis. This Mycoplasmopsis synoviae (strain 53) (Mycoplasma synoviae) protein is Enolase.